Reading from the N-terminus, the 334-residue chain is S-adenosylmethionine:tRNA ribosyltransferase-isomerase (334 aa).

This sequence belongs to the QueA family. In terms of assembly, monomer.

The protein localises to the cytoplasm. The catalysed reaction is 7-aminomethyl-7-carbaguanosine(34) in tRNA + S-adenosyl-L-methionine = epoxyqueuosine(34) in tRNA + adenine + L-methionine + 2 H(+). It functions in the pathway tRNA modification; tRNA-queuosine biosynthesis. Its function is as follows. Transfers and isomerizes the ribose moiety from AdoMet to the 7-aminomethyl group of 7-deazaguanine (preQ1-tRNA) to give epoxyqueuosine (oQ-tRNA). The sequence is that of S-adenosylmethionine:tRNA ribosyltransferase-isomerase from Aquifex aeolicus (strain VF5).